Here is a 498-residue protein sequence, read N- to C-terminus: GTPase Der (498 aa).

EngA-type G domains follow at residues 3-167 (PVVA…FDDL) and 210-383 (IKLA…KSAT). Residues 9 to 16 (GRPNVGKS), 57 to 61 (DTGGI), 119 to 122 (NKID), 216 to 223 (GRPNVGKS), 263 to 267 (DTAGV), and 328 to 331 (NKWD) each bind GTP. Residues 384–468 (TRVGTSVLTR…PIRINFQNSD (85 aa)) enclose the KH-like domain.

The protein belongs to the TRAFAC class TrmE-Era-EngA-EngB-Septin-like GTPase superfamily. EngA (Der) GTPase family. Associates with the 50S ribosomal subunit.

Functionally, GTPase that plays an essential role in the late steps of ribosome biogenesis. The sequence is that of GTPase Der from Vibrio campbellii (strain ATCC BAA-1116).